The following is a 303-amino-acid chain: Methionyl-tRNA formyltransferase (303 aa).

(6S)-5,6,7,8-tetrahydrofolate is bound at residue 108 to 111; the sequence is SDLP.

Belongs to the Fmt family.

The enzyme catalyses L-methionyl-tRNA(fMet) + (6R)-10-formyltetrahydrofolate = N-formyl-L-methionyl-tRNA(fMet) + (6S)-5,6,7,8-tetrahydrofolate + H(+). Functionally, attaches a formyl group to the free amino group of methionyl-tRNA(fMet). The formyl group appears to play a dual role in the initiator identity of N-formylmethionyl-tRNA by promoting its recognition by IF2 and preventing the misappropriation of this tRNA by the elongation apparatus. The polypeptide is Methionyl-tRNA formyltransferase (Rickettsia typhi (strain ATCC VR-144 / Wilmington)).